A 61-amino-acid polypeptide reads, in one-letter code: Large ribosomal subunit protein eL20 (61 aa).

The protein belongs to the eukaryotic ribosomal protein eL20 family. In terms of assembly, part of the 50S ribosomal subunit. Binds 23S rRNA.

The chain is Large ribosomal subunit protein eL20 from Methanosarcina acetivorans (strain ATCC 35395 / DSM 2834 / JCM 12185 / C2A).